The following is a 285-amino-acid chain: Shikimate dehydrogenase (NADP(+)) (285 aa).

Residues 20–22 (SIS) and serine 67 contribute to the shikimate site. Lysine 71 acts as the Proton acceptor in catalysis. Asparagine 92 and aspartate 107 together coordinate shikimate. Residues 129–133 (GAGGA) and isoleucine 227 each bind NADP(+). Tyrosine 229 is a binding site for shikimate. Residue glycine 250 participates in NADP(+) binding.

The protein belongs to the shikimate dehydrogenase family. Homodimer.

The enzyme catalyses shikimate + NADP(+) = 3-dehydroshikimate + NADPH + H(+). Its pathway is metabolic intermediate biosynthesis; chorismate biosynthesis; chorismate from D-erythrose 4-phosphate and phosphoenolpyruvate: step 4/7. Involved in the biosynthesis of the chorismate, which leads to the biosynthesis of aromatic amino acids. Catalyzes the reversible NADPH linked reduction of 3-dehydroshikimate (DHSA) to yield shikimate (SA). The polypeptide is Shikimate dehydrogenase (NADP(+)) (Streptococcus thermophilus (strain ATCC BAA-491 / LMD-9)).